A 287-amino-acid polypeptide reads, in one-letter code: tRNA N(3)-cytidine methyltransferase METTL6 (287 aa).

The S-adenosyl-L-methionine site is built by W45, Y49, G87, D110, D136, L137, and I157. The tract at residues 267-287 (RKPPKDPAPTTDSASLLRKEF) is disordered.

The protein belongs to the methyltransferase superfamily. METL family. In terms of assembly, monomer. Interacts with SARS1/SerRS; interaction is mediated via tRNA(Ser) and is required for N(3)-methylcytidine methylation.

It is found in the cytoplasm. The protein localises to the nucleus. The catalysed reaction is cytidine(32) in tRNA(Ser) + S-adenosyl-L-methionine = N(3)-methylcytidine(32) in tRNA(Ser) + S-adenosyl-L-homocysteine + H(+). Functionally, S-adenosyl-L-methionine-dependent methyltransferase that mediates N(3)-methylcytidine modification of residue 32 of the tRNA anticodon loop of tRNA(Ser), including tRNA(Ser)(UGA) and tRNA(Ser)(GCU). Interaction with SARS1/SerRS is required for N(3)-methylcytidine methylation. This chain is tRNA N(3)-cytidine methyltransferase METTL6 (Mettl6), found in Rattus norvegicus (Rat).